The sequence spans 319 residues: NADH-ubiquinone oxidoreductase chain 1 (319 aa).

A run of 8 helical transmembrane segments spans residues Leu3–Phe23, Leu74–Pro94, Ile106–Ala126, Thr149–Phe169, Ala175–Ala195, Leu226–Phe246, Leu254–Val274, and Phe294–Gly314.

The protein belongs to the complex I subunit 1 family.

The protein localises to the mitochondrion inner membrane. It carries out the reaction a ubiquinone + NADH + 5 H(+)(in) = a ubiquinol + NAD(+) + 4 H(+)(out). Its function is as follows. Core subunit of the mitochondrial membrane respiratory chain NADH dehydrogenase (Complex I) that is believed to belong to the minimal assembly required for catalysis. Complex I functions in the transfer of electrons from NADH to the respiratory chain. The immediate electron acceptor for the enzyme is believed to be ubiquinone. The protein is NADH-ubiquinone oxidoreductase chain 1 (MT-ND1) of Polypterus ornatipinnis (Ornate bichir).